The chain runs to 216 residues: Octanoyltransferase (216 aa).

Residues 24-212 (KFRKECILFL…NLCSFLEPIN (189 aa)) enclose the BPL/LPL catalytic domain. Substrate contacts are provided by residues 69-76 (RGGDFTAH), 140-142 (SIG), and 153-155 (GIA). Cys-171 functions as the Acyl-thioester intermediate in the catalytic mechanism.

The protein belongs to the LipB family.

Its subcellular location is the cytoplasm. The enzyme catalyses octanoyl-[ACP] + L-lysyl-[protein] = N(6)-octanoyl-L-lysyl-[protein] + holo-[ACP] + H(+). Its pathway is protein modification; protein lipoylation via endogenous pathway; protein N(6)-(lipoyl)lysine from octanoyl-[acyl-carrier-protein]: step 1/2. Functionally, catalyzes the transfer of endogenously produced octanoic acid from octanoyl-acyl-carrier-protein onto the lipoyl domains of lipoate-dependent enzymes. Lipoyl-ACP can also act as a substrate although octanoyl-ACP is likely to be the physiological substrate. This chain is Octanoyltransferase, found in Leptospira interrogans serogroup Icterohaemorrhagiae serovar Lai (strain 56601).